Reading from the N-terminus, the 143-residue chain is Large ribosomal subunit protein uL11 (143 aa).

Belongs to the universal ribosomal protein uL11 family. Part of the ribosomal stalk of the 50S ribosomal subunit. Interacts with L10 and the large rRNA to form the base of the stalk. L10 forms an elongated spine to which L12 dimers bind in a sequential fashion forming a multimeric L10(L12)X complex. One or more lysine residues are methylated.

In terms of biological role, forms part of the ribosomal stalk which helps the ribosome interact with GTP-bound translation factors. The protein is Large ribosomal subunit protein uL11 of Stutzerimonas stutzeri (strain A1501) (Pseudomonas stutzeri).